Here is a 135-residue protein sequence, read N- to C-terminus: Large ribosomal subunit protein eL32 (135 aa).

Belongs to the eukaryotic ribosomal protein eL32 family.

This chain is Large ribosomal subunit protein eL32, found in Methanococcus maripaludis (strain C7 / ATCC BAA-1331).